Here is a 217-residue protein sequence, read N- to C-terminus: Ribonuclease T (217 aa).

One can recognise an Exonuclease domain in the interval 20 to 195 (VVVDVETAGL…YDTERTAMLF (176 aa)). The Mg(2+) site is built by D23, E25, H182, and D187. H182 (proton donor/acceptor) is an active-site residue.

The protein belongs to the RNase T family. As to quaternary structure, homodimer. It depends on Mg(2+) as a cofactor.

Its function is as follows. Trims short 3' overhangs of a variety of RNA species, leaving a one or two nucleotide 3' overhang. Responsible for the end-turnover of tRNA: specifically removes the terminal AMP residue from uncharged tRNA (tRNA-C-C-A). Also appears to be involved in tRNA biosynthesis. The polypeptide is Ribonuclease T (Blochmanniella pennsylvanica (strain BPEN)).